A 149-amino-acid polypeptide reads, in one-letter code: SsrA-binding protein (149 aa).

The protein belongs to the SmpB family.

It is found in the cytoplasm. Functionally, required for rescue of stalled ribosomes mediated by trans-translation. Binds to transfer-messenger RNA (tmRNA), required for stable association of tmRNA with ribosomes. tmRNA and SmpB together mimic tRNA shape, replacing the anticodon stem-loop with SmpB. tmRNA is encoded by the ssrA gene; the 2 termini fold to resemble tRNA(Ala) and it encodes a 'tag peptide', a short internal open reading frame. During trans-translation Ala-aminoacylated tmRNA acts like a tRNA, entering the A-site of stalled ribosomes, displacing the stalled mRNA. The ribosome then switches to translate the ORF on the tmRNA; the nascent peptide is terminated with the 'tag peptide' encoded by the tmRNA and targeted for degradation. The ribosome is freed to recommence translation, which seems to be the essential function of trans-translation. In Wolbachia pipientis wMel, this protein is SsrA-binding protein.